Here is a 191-residue protein sequence, read N- to C-terminus: NAD(P)H-quinone oxidoreductase subunit 6, chloroplastic (191 aa).

Helical transmembrane passes span 10-30 (TIFL…ILLT), 32-52 (IVYS…LYLL), 61-81 (AQIL…VMLI), 89-109 (FFVY…SIFL), and 153-173 (FLLP…GAIT).

Belongs to the complex I subunit 6 family. NDH is composed of at least 16 different subunits, 5 of which are encoded in the nucleus.

Its subcellular location is the plastid. It is found in the chloroplast thylakoid membrane. It carries out the reaction a plastoquinone + NADH + (n+1) H(+)(in) = a plastoquinol + NAD(+) + n H(+)(out). The enzyme catalyses a plastoquinone + NADPH + (n+1) H(+)(in) = a plastoquinol + NADP(+) + n H(+)(out). In terms of biological role, NDH shuttles electrons from NAD(P)H:plastoquinone, via FMN and iron-sulfur (Fe-S) centers, to quinones in the photosynthetic chain and possibly in a chloroplast respiratory chain. The immediate electron acceptor for the enzyme in this species is believed to be plastoquinone. Couples the redox reaction to proton translocation, and thus conserves the redox energy in a proton gradient. The chain is NAD(P)H-quinone oxidoreductase subunit 6, chloroplastic (ndhG) from Marchantia polymorpha (Common liverwort).